Consider the following 286-residue polypeptide: Neuferricin homolog (286 aa).

Positions 1–23 (MFGFVKYLFKLQFLFILAAVLAG) are cleaved as a signal peptide. Positions 61–145 (ATVLTSAELS…KPNDLLGLAN (85 aa)) constitute a Cytochrome b5 heme-binding domain. The stretch at 176-200 (HKYLALLEQAQIAKAEVDELRSKYP) forms a coiled coil.

Belongs to the cytochrome b5 family. MAPR subfamily.

The protein resides in the secreted. In terms of biological role, heme-binding protein. This Drosophila pseudoobscura pseudoobscura (Fruit fly) protein is Neuferricin homolog.